The chain runs to 260 residues: 3'-5' ssDNA/RNA exonuclease TatD (260 aa).

Residues Glu92, His128, and His153 each contribute to the a divalent metal cation site.

It belongs to the metallo-dependent hydrolases superfamily. TatD-type hydrolase family. TatD subfamily. Monomer. Mg(2+) serves as cofactor.

It is found in the cytoplasm. In terms of biological role, 3'-5' exonuclease that prefers single-stranded DNA and RNA. May play a role in the H(2)O(2)-induced DNA damage repair. This chain is 3'-5' ssDNA/RNA exonuclease TatD, found in Pectobacterium atrosepticum (strain SCRI 1043 / ATCC BAA-672) (Erwinia carotovora subsp. atroseptica).